The following is a 72-amino-acid chain: Cell division protein ZapB (72 aa).

Positions 1–72 (MSLEILDQLE…RSLLGKIDNV (72 aa)) form a coiled coil. Residues 33 to 57 (KNNQSQQANDALRSENEQLKSEHQN) are disordered. The segment covering 44–57 (LRSENEQLKSEHQN) has biased composition (basic and acidic residues).

Belongs to the ZapB family. As to quaternary structure, homodimer. The ends of the coiled-coil dimer bind to each other, forming polymers. Interacts with FtsZ.

The protein resides in the cytoplasm. Non-essential, abundant cell division factor that is required for proper Z-ring formation. It is recruited early to the divisome by direct interaction with FtsZ, stimulating Z-ring assembly and thereby promoting cell division earlier in the cell cycle. Its recruitment to the Z-ring requires functional FtsA or ZipA. This chain is Cell division protein ZapB, found in Pasteurella multocida (strain Pm70).